The chain runs to 454 residues: Kynurenine--oxoglutarate transaminase 3 (454 aa).

Substrate is bound at residue Gly-71. Lys-116 bears the N6-acetyllysine; alternate mark. Lys-116 carries the N6-succinyllysine; alternate modification. Asn-218 provides a ligand contact to substrate. Lys-280 carries the post-translational modification N6-(pyridoxal phosphate)lysine. Residue Arg-429 coordinates substrate.

It belongs to the class-I pyridoxal-phosphate-dependent aminotransferase family. As to quaternary structure, homodimer. It depends on pyridoxal 5'-phosphate as a cofactor.

It catalyses the reaction L-kynurenine + 2-oxoglutarate = kynurenate + L-glutamate + H2O. The catalysed reaction is L-kynurenine + glyoxylate = kynurenate + glycine + H2O. It carries out the reaction 3-hydroxy-L-kynurenine + glyoxylate = xanthurenate + glycine + H2O. The enzyme catalyses an S-substituted L-cysteine + H2O = a thiol + pyruvate + NH4(+). It functions in the pathway amino-acid degradation; L-kynurenine degradation; kynurenate from L-kynurenine: step 1/2. In terms of biological role, catalyzes the irreversible transamination of the L-tryptophan metabolite L-kynurenine to form kynurenic acid (KA), an intermediate in the tryptophan catabolic pathway which is also a broad spectrum antagonist of the three ionotropic excitatory amino acid receptors among others. May catalyze the beta-elimination of S-conjugates and Se-conjugates of L-(seleno)cysteine, resulting in the cleavage of the C-S or C-Se bond. Has transaminase activity towards L-kynurenine, tryptophan, phenylalanine, serine, cysteine, methionine, histidine, glutamine and asparagine with glyoxylate as an amino group acceptor (in vitro). Has lower activity with 2-oxoglutarate as amino group acceptor (in vitro). This Rattus norvegicus (Rat) protein is Kynurenine--oxoglutarate transaminase 3.